The primary structure comprises 438 residues: Acid phosphatase type 7 (438 aa).

The signal sequence occupies residues M1–G23. Fe cation is bound by residues D141, D170, and Y173. A Zn(2+)-binding site is contributed by D170. N205 serves as a coordination point for Zn(2+). N-linked (GlcNAc...) asparagine glycosylation occurs at N211. Zn(2+)-binding residues include H286 and H333. A Fe cation-binding site is contributed by H335. Residues N350 and N404 are each glycosylated (N-linked (GlcNAc...) asparagine).

Belongs to the metallophosphoesterase superfamily. Purple acid phosphatase family. The cofactor is Fe cation. Zn(2+) serves as cofactor.

It localises to the secreted. It catalyses the reaction a phosphate monoester + H2O = an alcohol + phosphate. In Mus musculus (Mouse), this protein is Acid phosphatase type 7.